A 207-amino-acid chain; its full sequence is Large ribosomal subunit protein uL4 (207 aa).

Residues 54–74 (RSDVRGGGKKPYRQKGTGNAR) form a disordered region.

This sequence belongs to the universal ribosomal protein uL4 family. As to quaternary structure, part of the 50S ribosomal subunit.

Functionally, one of the primary rRNA binding proteins, this protein initially binds near the 5'-end of the 23S rRNA. It is important during the early stages of 50S assembly. It makes multiple contacts with different domains of the 23S rRNA in the assembled 50S subunit and ribosome. Forms part of the polypeptide exit tunnel. The chain is Large ribosomal subunit protein uL4 from Magnetococcus marinus (strain ATCC BAA-1437 / JCM 17883 / MC-1).